A 569-amino-acid chain; its full sequence is Cationic amino acid transporter 9, chloroplastic (569 aa).

The N-terminal 41 residues, 1–41 (MGGHEGFSNQRLSSATWFSHFRASALRSKSLPPPSSQTAVR), are a transit peptide targeting the chloroplast. 14 helical membrane passes run 53-73 (GLFD…VFVV), 81-101 (AGPG…LNAL), 113-135 (VVGG…LVFV), 155-175 (YAVA…LWMG), 181-201 (LGGL…LTLV), 215-235 (VMTA…AFEI), 250-270 (AVLT…AVAN), 284-304 (IGIM…CLVL), 333-353 (ILIS…GLYV), 406-428 (HILS…ALRL), 444-464 (WQEG…AGVF), 467-487 (FSAS…ASAV), 502-522 (FSCP…IFLF), and 528-548 (EAWI…ALYG).

It belongs to the amino acid-polyamine-organocation (APC) superfamily. Cationic amino acid transporter (CAT) (TC 2.A.3.3) family. In terms of tissue distribution, expressed in roots, stems, flowers, and leaves.

The protein resides in the plastid. Its subcellular location is the chloroplast membrane. Functionally, permease involved in the transport of the cationic amino acids. The polypeptide is Cationic amino acid transporter 9, chloroplastic (CAT9) (Arabidopsis thaliana (Mouse-ear cress)).